Reading from the N-terminus, the 464-residue chain is Serine/threonine-protein kinase 38-like (464 aa).

Residue A2 is modified to N-acetylalanine. Residues 64 to 89 (KLRRSQHARKETEFLRLKRTRLGLDD) are S100B binding. A Phosphothreonine modification is found at T75. The region spanning 90–383 (FESLKVIGRG…VEEIKGHPFF (294 aa)) is the Protein kinase domain. ATP contacts are provided by residues 96-104 (IGRGAFGEV) and K119. The Proton acceptor role is filled by D213. Phosphoserine; by autocatalysis is present on S282. One can recognise an AGC-kinase C-terminal domain in the interval 384-453 (EGVDWGHIRE…KRFEGLTQRG (70 aa)). At T442 the chain carries Phosphothreonine; by STK24/MST3.

This sequence belongs to the protein kinase superfamily. AGC Ser/Thr protein kinase family. Homodimeric S100B binds two molecules of STK38L. Interacts with MOB1 and MOB2. Interacts with MICAL1; leading to inhibit the protein kinase activity by antagonizing activation by MST1/STK4. It depends on Mg(2+) as a cofactor. Highly expressed in the large and small intestine, stomach and testis. High levels also present in the brain, in particular the neurocortex, basal forebrain, hippocampus, the amygdala, cerebellum and brainstem.

The protein resides in the cytoplasm. The protein localises to the cytoskeleton. It localises to the membrane. The catalysed reaction is L-seryl-[protein] + ATP = O-phospho-L-seryl-[protein] + ADP + H(+). The enzyme catalyses L-threonyl-[protein] + ATP = O-phospho-L-threonyl-[protein] + ADP + H(+). Its activity is regulated as follows. Activated by binding of S100B which releases autoinhibitory N-lobe interactions, enabling ATP to bind and the autophosphorylation of Ser-282. Thr-442 then undergoes calcium-dependent phosphorylation by STK24/MST3. Interactions between phosphorylated Thr-442 and the N-lobe promote additional structural changes that complete the activation of the kinase. Autoinhibition is also released by the binding of MOB1/MOBKL1A and MOB2 to the N-terminal of STK38L. Involved in the regulation of structural processes in differentiating and mature neuronal cells. The polypeptide is Serine/threonine-protein kinase 38-like (Mus musculus (Mouse)).